A 282-amino-acid polypeptide reads, in one-letter code: ATP synthase gamma chain (282 aa).

The protein belongs to the ATPase gamma chain family. F-type ATPases have 2 components, CF(1) - the catalytic core - and CF(0) - the membrane proton channel. CF(1) has five subunits: alpha(3), beta(3), gamma(1), delta(1), epsilon(1). CF(0) has three main subunits: a, b and c.

The protein localises to the cell membrane. In terms of biological role, produces ATP from ADP in the presence of a proton gradient across the membrane. The gamma chain is believed to be important in regulating ATPase activity and the flow of protons through the CF(0) complex. This chain is ATP synthase gamma chain, found in Clostridium botulinum (strain Kyoto / Type A2).